A 274-amino-acid chain; its full sequence is NADPH-dependent 7-cyano-7-deazaguanine reductase (274 aa).

80 to 82 (VES) contacts substrate. Position 82-83 (82-83 (SK)) interacts with NADPH. The active-site Thioimide intermediate is the cysteine 181. Aspartate 188 functions as the Proton donor in the catalytic mechanism. Residue 220–221 (HE) coordinates substrate. 249–250 (RG) contacts NADPH.

The protein belongs to the GTP cyclohydrolase I family. QueF type 2 subfamily. In terms of assembly, homodimer.

The protein resides in the cytoplasm. The catalysed reaction is 7-aminomethyl-7-carbaguanine + 2 NADP(+) = 7-cyano-7-deazaguanine + 2 NADPH + 3 H(+). It functions in the pathway tRNA modification; tRNA-queuosine biosynthesis. Functionally, catalyzes the NADPH-dependent reduction of 7-cyano-7-deazaguanine (preQ0) to 7-aminomethyl-7-deazaguanine (preQ1). In Burkholderia ambifaria (strain MC40-6), this protein is NADPH-dependent 7-cyano-7-deazaguanine reductase.